We begin with the raw amino-acid sequence, 451 residues long: MAKKLFIQTHGCQMNEYDSSRMADLLGESHEMELTDNAEEADVLLLNTCSIREKAQDKVYHQLGRWKKLKQKNPNLVIGVGGCVASQEGDAIRKRAKHVDMIFGPQTLHKLPEMVNAAGKHIPITDVTFPEIEKFDHLPAPRVEGAEAFVSIMEGCSKYCTFCVVPYTRGEEVSRPFDSILKEVVQLAEQGVREIHLLGQNVNAYRGDTAEGDEADLADIIHAVAQIDGVERIRFTTSHPVEFSDSLIEAFRNEPKLVSHLHLPVQSGADNILSAMKRGHDRQYYIDKINRIKEARPGISLSSDFIIGFPGETDDDFVDTMNLIQEIGFDHSFSFVYSQRPGTPASNLEDDTPEDVKKERLAILQRRISQQAYDISLSMVGEVQRILISGYSPRDPGQLQGRTENNRIVNFRAFDPQLIGKFADVVITDAYPNSLLGELVGSELDSDFVLQ.

The region spanning 3 to 120 (KKLFIQTHGC…LPEMVNAAGK (118 aa)) is the MTTase N-terminal domain. Residues Cys-12, Cys-49, Cys-83, Cys-156, Cys-160, and Cys-163 each contribute to the [4Fe-4S] cluster site. The 233-residue stretch at 142–374 (RVEGAEAFVS…QRRISQQAYD (233 aa)) folds into the Radical SAM core domain. One can recognise a TRAM domain in the interval 377–441 (LSMVGEVQRI…PNSLLGELVG (65 aa)).

The protein belongs to the methylthiotransferase family. MiaB subfamily. As to quaternary structure, monomer. [4Fe-4S] cluster is required as a cofactor.

The protein localises to the cytoplasm. It carries out the reaction N(6)-dimethylallyladenosine(37) in tRNA + (sulfur carrier)-SH + AH2 + 2 S-adenosyl-L-methionine = 2-methylsulfanyl-N(6)-dimethylallyladenosine(37) in tRNA + (sulfur carrier)-H + 5'-deoxyadenosine + L-methionine + A + S-adenosyl-L-homocysteine + 2 H(+). Its function is as follows. Catalyzes the methylthiolation of N6-(dimethylallyl)adenosine (i(6)A), leading to the formation of 2-methylthio-N6-(dimethylallyl)adenosine (ms(2)i(6)A) at position 37 in tRNAs that read codons beginning with uridine. This is tRNA-2-methylthio-N(6)-dimethylallyladenosine synthase from Marinomonas sp. (strain MWYL1).